Reading from the N-terminus, the 456-residue chain is UDP-N-acetylglucosamine 1-carboxyvinyltransferase (456 aa).

Residue 34-35 (KN) coordinates phosphoenolpyruvate. R104 serves as a coordination point for UDP-N-acetyl-alpha-D-glucosamine. The Proton donor role is filled by C128. C128 bears the 2-(S-cysteinyl)pyruvic acid O-phosphothioketal mark. The UDP-N-acetyl-alpha-D-glucosamine site is built by D319 and I341.

This sequence belongs to the EPSP synthase family. MurA subfamily.

It is found in the cytoplasm. It catalyses the reaction phosphoenolpyruvate + UDP-N-acetyl-alpha-D-glucosamine = UDP-N-acetyl-3-O-(1-carboxyvinyl)-alpha-D-glucosamine + phosphate. The protein operates within cell wall biogenesis; peptidoglycan biosynthesis. In terms of biological role, cell wall formation. Adds enolpyruvyl to UDP-N-acetylglucosamine. The protein is UDP-N-acetylglucosamine 1-carboxyvinyltransferase of Prochlorococcus marinus (strain AS9601).